The sequence spans 504 residues: Ribonuclease Y (504 aa).

Residues 194-279 (TVHVVSLPND…EMVEKAKQEV (86 aa)) enclose the KH domain. The HD domain maps to 320 to 413 (VLKHSMEVAY…VQAADAISAA (94 aa)).

Belongs to the RNase Y family.

Its function is as follows. Endoribonuclease that initiates mRNA decay. The sequence is that of Ribonuclease Y from Clostridium novyi (strain NT).